A 471-amino-acid chain; its full sequence is MKIKTRFAPSPTGYLHVGGARTALYSWLFARNHGGEFVLRIEDTDLERSTPEAIEAIMDGMNWLSLEWDEGPYYQTKRFDRYNAVIDQMLEEGTAYKCYCSKERLEALREEQMAKGEKPRYDGRCRHSHEHHADDEPCVVRFANPQEGSVVFDDQIRGPIEFSNQELDDLIIRRTDGSPTYNFCVVVDDWDMEITHVIRGEDHINNTPRQINILKALNAPVPVYAHVSMINGDDGKKLSKRHGAVSVMQYRDDGYLPEALLNYLVRLGWSHGDQEIFTREEMIKYFTLNAVSKSASAFNTDKLLWLNHHYINALPPEYVATHLQWHIEQENIDTRNGPQLADLVKLLGERCKTLKEMAQTCRYFYEDFAEFDADAAKKHLRPVARQPLEVVRDKLAAITDWTAENVHHAIQATADELEVGMGKVGMPLRVAVTGAGQSPALDVTVHAIGKTRSIERINKALAFIAERENQQ.

The 'HIGH' region motif lies at 9 to 19 (PSPTGYLHVGG). The Zn(2+) site is built by Cys98, Cys100, Cys125, and His127. Positions 237-241 (KLSKR) match the 'KMSKS' region motif. Lys240 contacts ATP.

Belongs to the class-I aminoacyl-tRNA synthetase family. Glutamate--tRNA ligase type 1 subfamily. As to quaternary structure, monomer. Zn(2+) serves as cofactor.

Its subcellular location is the cytoplasm. The enzyme catalyses tRNA(Glu) + L-glutamate + ATP = L-glutamyl-tRNA(Glu) + AMP + diphosphate. Its function is as follows. Catalyzes the attachment of glutamate to tRNA(Glu) in a two-step reaction: glutamate is first activated by ATP to form Glu-AMP and then transferred to the acceptor end of tRNA(Glu). The chain is Glutamate--tRNA ligase from Escherichia coli (strain SMS-3-5 / SECEC).